Consider the following 442-residue polypeptide: UDP-N-acetylmuramate--L-alanine ligase (442 aa).

109–115 (GAHGKTS) contributes to the ATP binding site.

Belongs to the MurCDEF family.

Its subcellular location is the cytoplasm. It carries out the reaction UDP-N-acetyl-alpha-D-muramate + L-alanine + ATP = UDP-N-acetyl-alpha-D-muramoyl-L-alanine + ADP + phosphate + H(+). It participates in cell wall biogenesis; peptidoglycan biosynthesis. Its function is as follows. Cell wall formation. The sequence is that of UDP-N-acetylmuramate--L-alanine ligase from Streptococcus pyogenes serotype M49 (strain NZ131).